Consider the following 884-residue polypeptide: Alanine--tRNA ligase (884 aa).

Residues His-570, His-574, Cys-676, and His-680 each coordinate Zn(2+).

This sequence belongs to the class-II aminoacyl-tRNA synthetase family. It depends on Zn(2+) as a cofactor.

It is found in the cytoplasm. It catalyses the reaction tRNA(Ala) + L-alanine + ATP = L-alanyl-tRNA(Ala) + AMP + diphosphate. In terms of biological role, catalyzes the attachment of alanine to tRNA(Ala) in a two-step reaction: alanine is first activated by ATP to form Ala-AMP and then transferred to the acceptor end of tRNA(Ala). Also edits incorrectly charged Ser-tRNA(Ala) and Gly-tRNA(Ala) via its editing domain. The chain is Alanine--tRNA ligase from Lawsonia intracellularis (strain PHE/MN1-00).